The primary structure comprises 1072 residues: Carbamoyl phosphate synthase large chain (1072 aa).

The interval 1 to 401 (MPKRLDINTI…SLLKAVRSLE (401 aa)) is carboxyphosphate synthetic domain. ATP contacts are provided by R129, R169, G175, G176, K208, I210, E215, G241, V242, H243, Q284, and E298. One can recognise an ATP-grasp 1 domain in the interval 133–327 (RTLMQDLNEP…IAKLAAKIAV (195 aa)). Q284, E298, and N300 together coordinate Mg(2+). Positions 284, 298, and 300 each coordinate Mn(2+). The tract at residues 402–546 (LGIYHLELDH…YSTYADENES (145 aa)) is oligomerization domain. A carbamoyl phosphate synthetic domain region spans residues 547-929 (IVTDRKSVVV…ALYKGLVASG (383 aa)). Positions 671 to 861 (EAALTKLGIP…MANVATKVIL (191 aa)) constitute an ATP-grasp 2 domain. 9 residues coordinate ATP: R707, R746, E752, G777, V778, H779, S780, Q820, and E832. Positions 820, 832, and 834 each coordinate Mg(2+). The Mn(2+) site is built by Q820, E832, and N834. The 143-residue stretch at 930–1072 (INIPTHGSVI…QTKRHEVVHA (143 aa)) folds into the MGS-like domain. Residues 930–1072 (INIPTHGSVI…QTKRHEVVHA (143 aa)) are allosteric domain.

This sequence belongs to the CarB family. In terms of assembly, composed of two chains; the small (or glutamine) chain promotes the hydrolysis of glutamine to ammonia, which is used by the large (or ammonia) chain to synthesize carbamoyl phosphate. Tetramer of heterodimers (alpha,beta)4. The cofactor is Mg(2+). It depends on Mn(2+) as a cofactor.

It catalyses the reaction hydrogencarbonate + L-glutamine + 2 ATP + H2O = carbamoyl phosphate + L-glutamate + 2 ADP + phosphate + 2 H(+). The enzyme catalyses hydrogencarbonate + NH4(+) + 2 ATP = carbamoyl phosphate + 2 ADP + phosphate + 2 H(+). It participates in amino-acid biosynthesis; L-arginine biosynthesis; carbamoyl phosphate from bicarbonate: step 1/1. Its pathway is pyrimidine metabolism; UMP biosynthesis via de novo pathway; (S)-dihydroorotate from bicarbonate: step 1/3. Its function is as follows. Large subunit of the glutamine-dependent carbamoyl phosphate synthetase (CPSase). CPSase catalyzes the formation of carbamoyl phosphate from the ammonia moiety of glutamine, carbonate, and phosphate donated by ATP, constituting the first step of 2 biosynthetic pathways, one leading to arginine and/or urea and the other to pyrimidine nucleotides. The large subunit (synthetase) binds the substrates ammonia (free or transferred from glutamine from the small subunit), hydrogencarbonate and ATP and carries out an ATP-coupled ligase reaction, activating hydrogencarbonate by forming carboxy phosphate which reacts with ammonia to form carbamoyl phosphate. This chain is Carbamoyl phosphate synthase large chain, found in Bacillus cereus (strain AH187).